A 355-amino-acid polypeptide reads, in one-letter code: RNA binding protein fox-1 homolog 1 (355 aa).

Residues 1–123 (MNCEREQLRG…QPKRLHVSNI (123 aa)) are disordered. A compositionally biased stretch (polar residues) spans 70 to 112 (QSHSEQSAADTSAHTVSGTATTDDSAPTDGQPQTQPSENTENK). Residues 116 to 174 (KRLHVSNIPFRFRDPDLRQMFGGFGFVTFENSADADRAREKLHGTVVEGRKIEVNNATA) enclose the RRM domain. The residue at position 298 (R298) is an Asymmetric dimethylarginine.

As to quaternary structure, binds to the C-terminus of ATXN2.

The protein localises to the nucleus. It is found in the cytoplasm. RNA-binding protein that regulates alternative splicing events by binding to 5'-UGCAUGU-3' elements. Prevents binding of U2AF2 to the 3'-splice site. Regulates alternative splicing of tissue-specific exons and of differentially spliced exons during erythropoiesis. The protein is RNA binding protein fox-1 homolog 1 (RBFOX1) of Bos taurus (Bovine).